The sequence spans 598 residues: Probable pectinesterase/pectinesterase inhibitor 34 (598 aa).

The interval 1-40 (MGYERLGPSGATGSVTTSTTTAPILNQVSTSEQPENNNRR) is disordered. Residues 7–23 (GPSGATGSVTTSTTTAP) are compositionally biased toward low complexity. The span at 24 to 36 (ILNQVSTSEQPEN) shows a compositional bias: polar residues. A helical membrane pass occupies residues 46–66 (VVSSIVLAISLILAAAIFAGV). The interval 81–232 (RKPSQAISKA…SELVSNCLAI (152 aa)) is pectinesterase inhibitor 34. The tract at residues 284-582 (DIIVSKDGNG…FTVAEFIYGS (299 aa)) is pectinesterase 34. Residues threonine 360 and glutamine 390 each coordinate substrate. Aspartate 413 acts as the Proton donor; for pectinesterase activity in catalysis. Residues cysteine 427 and cysteine 447 are joined by a disulfide bond. Residue aspartate 434 is the Nucleophile; for pectinesterase activity of the active site. Residues arginine 502 and tryptophan 504 each coordinate substrate.

The protein in the N-terminal section; belongs to the PMEI family. This sequence in the C-terminal section; belongs to the pectinesterase family. In terms of tissue distribution, expressed in siliques.

It is found in the membrane. The enzyme catalyses [(1-&gt;4)-alpha-D-galacturonosyl methyl ester](n) + n H2O = [(1-&gt;4)-alpha-D-galacturonosyl](n) + n methanol + n H(+). Its pathway is glycan metabolism; pectin degradation; 2-dehydro-3-deoxy-D-gluconate from pectin: step 1/5. Acts in the modification of cell walls via demethylesterification of cell wall pectin. This is Probable pectinesterase/pectinesterase inhibitor 34 (PME34) from Arabidopsis thaliana (Mouse-ear cress).